The sequence spans 393 residues: MANDFLFTSESVSEGHPDKVADQISDAILDAIFKQDPRSRVAAETLTNTGLVVLAGEITTNAHVDYIQVARDTIKRIGYDNTEYGIDYKGCAVLVAYDKQSNDIAQGVDHASDDHLNIGAGDQGLMFGYACDETPELMPAPIYYAHRLMERQAQLRKDGRLPFLRPDAKSQVTMRYVNGKPHSIDTVVLSTQHSPDQSETPHKMKASFTEAIIEEIIKPVLPKEWLKETKYLINPTGRFVIGGPQGDCGLTGRKIIVDTYGGACPHGGGAFSGKDPSKVDRSAAYAARYVAKNIVAAGLARQCQIQVAYAIGVARPMNVTVYTEGTGVISDEKLSALVHEHFDLRPKGIIQMLDLLRPIYEKTAAYGHFGRDEPEFSWERTDRAALLRAAAGR.

ATP is bound at residue His16. Asp18 is a binding site for Mg(2+). Glu44 provides a ligand contact to K(+). Glu57 and Gln100 together coordinate L-methionine. The interval 100-110 (QSNDIAQGVDH) is flexible loop. ATP-binding positions include 167–169 (DAK), 238–239 (RF), Asp247, 253–254 (RK), Ala270, and Lys274. Residue Asp247 coordinates L-methionine. Lys278 provides a ligand contact to L-methionine.

Belongs to the AdoMet synthase family. Homotetramer; dimer of dimers. It depends on Mg(2+) as a cofactor. K(+) is required as a cofactor.

Its subcellular location is the cytoplasm. The catalysed reaction is L-methionine + ATP + H2O = S-adenosyl-L-methionine + phosphate + diphosphate. It functions in the pathway amino-acid biosynthesis; S-adenosyl-L-methionine biosynthesis; S-adenosyl-L-methionine from L-methionine: step 1/1. Catalyzes the formation of S-adenosylmethionine (AdoMet) from methionine and ATP. The overall synthetic reaction is composed of two sequential steps, AdoMet formation and the subsequent tripolyphosphate hydrolysis which occurs prior to release of AdoMet from the enzyme. This is S-adenosylmethionine synthase from Polaromonas sp. (strain JS666 / ATCC BAA-500).